Here is a 444-residue protein sequence, read N- to C-terminus: MKLRSKAAALLLLALAVLLLALLSLRARRDPEPPGFPARPEAAPQRRHAPVPTLPPEPRAFPGAAGRRSPRRQPPRLRPRAGRPRAASREKLARRPGETRSLHSVPPELWIHLAVVACGNRLEETLVMLKSAVLFSHRKMRFHIFTEDALKPEFDKQLRQWPDSYTKKFEHRLYPITFSVGNPQEWKKLFKPCAAQRLFLPAILKDVDSLLYVDTDVLFLRPVDDIWKLLRQFNSTQLAAMAPEHEIPKIGWYSRFARHPFYGSAGVNSGVMLMNLTRIRNTQFKNSLIPAGLAWEEMLLPLYQKYKSAITWGDQDLLNIIFYYNPECLYVFPCQWNYRPDHCMYGSNCKEAEREGVSVLHGNRGVYHDDKQPTFRALYEAIRDFPFQDNLFQSMYYPLQLKFLETVHTLCGRIPQVFLKQIEKTMRRAYEKHVIIHMGPNPMS.

The Cytoplasmic segment spans residues 1–4 (MKLR). The chain crosses the membrane as a helical; Signal-anchor for type II membrane protein span at residues 5 to 25 (SKAAALLLLALAVLLLALLSL). The Lumenal portion of the chain corresponds to 26–444 (RARRDPEPPG…IIHMGPNPMS (419 aa)). A disordered region spans residues 31 to 101 (PEPPGFPARP…LARRPGETRS (71 aa)). A compositionally biased stretch (basic residues) spans 68–83 (RSPRRQPPRLRPRAGR). A compositionally biased stretch (basic and acidic residues) spans 87–101 (ASREKLARRPGETRS). An N-linked (GlcNAc...) asparagine glycan is attached at Asn275.

The protein belongs to the glycosyltransferase 8 family.

It is found in the membrane. It carries out the reaction 3-O-(beta-D-glucosyl)-L-seryl-[EGF-like domain protein] + UDP-alpha-D-xylose = 3-O-[alpha-D-xylosyl-(1-&gt;3)-beta-D-glucosyl]-L-seryl-[EGF-like domain protein] + UDP + H(+). In terms of biological role, glycosyltransferase which elongates the O-linked glucose attached to EGF-like repeats in the extracellular domain of Notch proteins by catalyzing the addition of xylose. The protein is Glucoside xylosyltransferase 2 (Gxylt2) of Mus musculus (Mouse).